A 2328-amino-acid chain; its full sequence is Reducing polyketide synthase Preu2 (2328 aa).

Residues 1-259 (MMAVHLAVAS…GSNVHVIVES (259 aa)) enclose the Ketosynthase family 3 (KS3) domain. Residues 376–696 (IFTGQGAQWP…SGLLKRSSNS (321 aa)) are malonyl-CoA:ACP transacylase (MAT) domain. The N-terminal hotdog fold stretch occupies residues 766–899 (NELLGEELSM…GSLTVQFGDD (134 aa)). Residues 766–1057 (NELLGEELSM…FCTAPFRMST (292 aa)) form a dehydratase (DH) domain region. Residues 766 to 1059 (NELLGEELSM…TAPFRMSTPE (294 aa)) form the PKS/mFAS DH domain. The active-site Proton acceptor; for dehydratase activity is H798. The C-terminal hotdog fold stretch occupies residues 914–1059 (LTELDLDTFY…TAPFRMSTPE (146 aa)). Residue D969 is the Proton donor; for dehydratase activity of the active site. The interval 1198 to 1419 (DGMLTQLYSE…VDERVVSLRD (222 aa)) is methyltransferase (MT) domain. Residues 1932-2111 (CYIIIGTSDL…AASVVHLGHV (180 aa)) are ketoreductase (KR)domain. Residues 2231–2309 (SSSHDIIRNG…NIVDFAVAHL (79 aa)) form the Carrier domain. An O-(pantetheine 4'-phosphoryl)serine modification is found at S2269.

Requires pantetheine 4'-phosphate as cofactor.

Its function is as follows. Reducing polyketide synthase; part of a gene cluster that mediates the biosynthesis of a yet unidentified natural product. This chain is Reducing polyketide synthase Preu2, found in Preussia isomera (Coprophilous fungus).